The sequence spans 297 residues: HTH-type transcriptional regulator ArgP (297 aa).

The 57-residue stretch at 2 to 58 (FDYKLLSALAAVVEQAGFERAAQVLGLSQSAISQRIKLLEARVGQPVLVRGTPPSPT) folds into the HTH lysR-type domain. The H-T-H motif DNA-binding region spans 19–38 (FERAAQVLGLSQSAISQRIK).

Belongs to the LysR transcriptional regulatory family. Homodimer.

Controls the transcription of genes involved in arginine and lysine metabolism. This Pseudomonas fluorescens (strain Pf0-1) protein is HTH-type transcriptional regulator ArgP.